Consider the following 637-residue polypeptide: ATP-dependent zinc metalloprotease FtsH (637 aa).

At 1-6 the chain is on the cytoplasmic side; it reads MNNQGR. Residues 7 to 27 form a helical membrane-spanning segment; that stretch reads SILAWAALFIFVILLFNVFQS. The Periplasmic portion of the chain corresponds to 28–103; it reads DGLLGVRNNI…VVPLETRMNT (76 aa). Residues 104–124 form a helical membrane-spanning segment; it reads FLGFLISWFPMLLLIGVWVFF. At 125–637 the chain is on the cytoplasmic side; the sequence is MRQMHGGGKA…TKDKKENIIS (513 aa). Position 195-202 (195-202) interacts with ATP; the sequence is GPPGTGKT. His-417 is a Zn(2+) binding site. Glu-418 is an active-site residue. Residues His-421 and Asp-495 each contribute to the Zn(2+) site.

It in the central section; belongs to the AAA ATPase family. This sequence in the C-terminal section; belongs to the peptidase M41 family. As to quaternary structure, homohexamer. It depends on Zn(2+) as a cofactor.

Its subcellular location is the cell inner membrane. Its function is as follows. Acts as a processive, ATP-dependent zinc metallopeptidase for both cytoplasmic and membrane proteins. Plays a role in the quality control of integral membrane proteins. The sequence is that of ATP-dependent zinc metalloprotease FtsH from Rickettsia prowazekii (strain Madrid E).